Consider the following 491-residue polypeptide: Probable diguanylate cyclase CdgI (491 aa).

Residues 1–54 (MIQSTRISMGLFFKYFLSLTKIDPGQNYISLPSIKSSTHIALLFMVSMGTQKLK) lie on the Cytoplasmic side of the membrane. Residues 55–75 (AQSFFIFSLLLTLILFCITTL) traverse the membrane as a helical segment. At 76-89 (YNENTNVKLIPQMN) the chain is on the periplasmic side. Residues 90–110 (YLMVVVALFFLNAVIFLFMLM) traverse the membrane as a helical segment. Residues 111 to 121 (KYFTNKQILPT) lie on the Cytoplasmic side of the membrane. The helical transmembrane segment at 122-142 (LILSLAFLSGLIYLVETIVII) threads the bilayer. Residues 143 to 158 (HKPINGSTLIQTKSND) are Periplasmic-facing. A helical transmembrane segment spans residues 159 to 179 (VSIFYIFRQLSFICLTSLALF). The Cytoplasmic segment spans residues 180–193 (CYGKDNILDNNKKK). A helical membrane pass occupies residues 194–214 (TGILLLALIPFLVFPLLAHNL). At 215–236 (SSYNADYSLYVVDYCPDNHTAT) the chain is on the periplasmic side. The helical transmembrane segment at 237 to 257 (WGINYTKILVCLWAFLLFFII) threads the bilayer. Residues 258–265 (MRTRLASE) lie on the Cytoplasmic side of the membrane. The chain crosses the membrane as a helical span at residues 266–286 (LWPLIALLCLASLCCNLLLLT). The Periplasmic segment spans residues 287–293 (LDEYNYT). A helical membrane pass occupies residues 294–314 (IWYISRGIEVSSKLFVVSFLI). Over 315 to 491 (YNIFQELQLS…GGNKVIIHHI (177 aa)) the chain is Cytoplasmic. The GGDEF domain maps to 356–491 (KDFCVMLVDI…GGNKVIIHHI (136 aa)). Residues Asp-364 and Ile-365 each coordinate Mg(2+). Substrate-binding residues include Asn-372, His-377, and Asp-381. Glu-407 serves as a coordination point for Mg(2+). Catalysis depends on Glu-407, which acts as the Proton acceptor. Arg-427 provides a ligand contact to substrate.

As to quaternary structure, homodimer. Requires Mg(2+) as cofactor.

The protein resides in the cell inner membrane. The enzyme catalyses 2 GTP = 3',3'-c-di-GMP + 2 diphosphate. The protein operates within purine metabolism; 3',5'-cyclic di-GMP biosynthesis. Functionally, catalyzes the synthesis of cyclic-di-GMP (c-di-GMP) via the condensation of 2 GTP molecules. The sequence is that of Probable diguanylate cyclase CdgI from Escherichia coli (strain K12).